Consider the following 352-residue polypeptide: Tropomodulin-3 (352 aa).

The residue at position 25 (Ser25) is a Phosphoserine.

Belongs to the tropomodulin family. Binds to the N-terminus of tropomyosin and to actin. Interacts with FLII. In terms of tissue distribution, ubiquitous.

The protein localises to the cytoplasm. It localises to the cytoskeleton. Functionally, blocks the elongation and depolymerization of the actin filaments at the pointed end. The Tmod/TM complex contributes to the formation of the short actin protofilament, which in turn defines the geometry of the membrane skeleton. The polypeptide is Tropomodulin-3 (Tmod3) (Mus musculus (Mouse)).